We begin with the raw amino-acid sequence, 329 residues long: NAD(P)H-dependent D-xylose reductase (329 aa).

Residue Tyr-52 is the Proton donor of the active site. Position 114 (His-114) interacts with substrate. NAD(+) contacts are provided by residues 173-174 (SN), 222-231 (SSFGPVSFLE), and 278-288 (KSSKKERLLDN).

This sequence belongs to the aldo/keto reductase family.

It carries out the reaction xylitol + NAD(+) = D-xylose + NADH + H(+). The catalysed reaction is xylitol + NADP(+) = D-xylose + NADPH + H(+). It functions in the pathway carbohydrate metabolism; D-xylose degradation. In terms of biological role, reduces D-xylose into xylitol. This chain is NAD(P)H-dependent D-xylose reductase (XYL1), found in Kluyveromyces lactis (strain ATCC 8585 / CBS 2359 / DSM 70799 / NBRC 1267 / NRRL Y-1140 / WM37) (Yeast).